The following is a 192-amino-acid chain: Fe/S biogenesis protein NfuA (192 aa).

Residues C149 and C152 each contribute to the [4Fe-4S] cluster site.

The protein belongs to the NfuA family. As to quaternary structure, homodimer. [4Fe-4S] cluster serves as cofactor.

Functionally, involved in iron-sulfur cluster biogenesis. Binds a 4Fe-4S cluster, can transfer this cluster to apoproteins, and thereby intervenes in the maturation of Fe/S proteins. Could also act as a scaffold/chaperone for damaged Fe/S proteins. This Shewanella putrefaciens (strain CN-32 / ATCC BAA-453) protein is Fe/S biogenesis protein NfuA.